Here is a 982-residue protein sequence, read N- to C-terminus: E3 ubiquitin-protein ligase CBL-B (982 aa).

A 4H region spans residues 35-167 (PPKQAAADRR…KAIFPNGQFQ (133 aa)). The region spanning 35-343 (PPKQAAADRR…GRSYNPDLTG (309 aa)) is the Cbl-PTB domain. Residues 168 to 240 (GDNFRITKAD…FEFDIFTRLF (73 aa)) form an EF-hand-like region. Positions 221, 223, 225, 227, and 232 each coordinate Ca(2+). The SH2-like stretch occupies residues 241-343 (QPWGSILRNW…GRSYNPDLTG (103 aa)). S282 is modified (phosphoserine; by PKC/PRKCQ). Residue R286 coordinates 4-O-phospho-L-tyrosine. Residues 344 to 372 (LCEPTPHDHIKVTQEQYELYCEMGSTFQL) form a linker region. Y363 carries the phosphotyrosine modification. An RING-type zinc finger spans residues 373–412 (CKICAENDKDVKIEPCGHLMCTSCLTAWQESDGQGCPFCR). Residues 465–588 (ASVRKCTDRQ…SVPSRDQPMP (124 aa)) are disordered. Polar residues predominate over residues 473–486 (RQNSPVTSPGSSPL). Phosphoserine occurs at positions 476, 480, 484, 521, 525, and 529. Residues 543–567 (PLPAPPPPLRDPPPPPERPPPIPPD) form an interaction with VAV1 region. A compositionally biased stretch (pro residues) spans 544–566 (LPAPPPPLRDPPPPPERPPPIPP). S633 is subject to Phosphoserine. Phosphotyrosine occurs at positions 664 and 708. Disordered regions lie at residues 702 to 723 (EDDDDEYKIPSSHPVSLNSQPS) and 745 to 929 (THGA…EAAL). A compositionally biased stretch (polar residues) spans 714 to 723 (HPVSLNSQPS). Pro residues predominate over residues 819-828 (PSLPPPPPPA). Over residues 838-848 (PPGSSSRPSSG) the composition is skewed to low complexity. Positions 884-899 (RASQDYDQLPSSSDGS) are enriched in polar residues. Y889 is subject to Phosphotyrosine. The segment at 891 to 927 (QLPSSSDGSQAPARPPKPRPRRTAPEIHHRKPHGPEA) is interaction with SH3KBP1. The segment covering 906 to 922 (PKPRPRRTAPEIHHRKP) has biased composition (basic residues). One can recognise a UBA domain in the interval 931–970 (NVDAKIAKLMGEGYAFEEVKRALEIAQNNVEVARSILREF).

In terms of assembly, interacts with SH3 domain-containing proteins LCK, CRK and SORBS1. Interacts with LCP2 and ZAP70. Interacts with CBL. Interacts with SH3 domain-containing proteins VAV1, FYN, FGR, PLCG1, GRB2, CRKL, PIK3R1 and SH3KBP1/CIN85. Identified in heterotrimeric complexes with SH3KBP1/CIN85, CD2AP and ARHGEF7, where one CBLB peptide binds two copies of the other protein. Interacts with poly-ubiquitinated proteins. Dimerization is required for the binding of poly-ubiquitin, but not for the binding of mono-ubiquitin. Interacts with EGFR (phosphorylated). Interacts with IFT20. Phosphorylated on tyrosine and serine residues upon TCR or BCR activation. Phosphorylated on Tyr-664 and Tyr-708 in adipocytes following insulin stimulation. Post-translationally, auto-ubiquitinated upon EGF-mediated cell activation or upon T-cell costimulation by CD28; which promotes proteasomal degradation.

It is found in the cytoplasm. It catalyses the reaction S-ubiquitinyl-[E2 ubiquitin-conjugating enzyme]-L-cysteine + [acceptor protein]-L-lysine = [E2 ubiquitin-conjugating enzyme]-L-cysteine + N(6)-ubiquitinyl-[acceptor protein]-L-lysine.. It functions in the pathway protein modification; protein ubiquitination. E3 ubiquitin-protein ligase which accepts ubiquitin from specific E2 ubiquitin-conjugating enzymes, and transfers it to substrates, generally promoting their degradation by the proteasome. Negatively regulates TCR (T-cell receptor), BCR (B-cell receptor) and FCER1 (high affinity immunoglobulin epsilon receptor) signal transduction pathways. In naive T-cells, inhibits VAV1 activation upon TCR engagement and imposes a requirement for CD28 costimulation for proliferation and IL-2 production. Also acts by promoting PIK3R1/p85 ubiquitination, which impairs its recruitment to the TCR and subsequent activation. In activated T-cells, inhibits PLCG1 activation and calcium mobilization upon restimulation and promotes anergy. In B-cells, acts by ubiquitinating SYK and promoting its proteasomal degradation. Slightly promotes SRC ubiquitination. May be involved in EGFR ubiquitination and internalization. May be functionally coupled with the E2 ubiquitin-protein ligase UB2D3. In association with CBL, required for proper feedback inhibition of ciliary platelet-derived growth factor receptor-alpha (PDGFRA) signaling pathway via ubiquitination and internalization of PDGFRA. The chain is E3 ubiquitin-protein ligase CBL-B (Cblb) from Mus musculus (Mouse).